A 185-amino-acid chain; its full sequence is ATP-dependent protease subunit HslV (185 aa).

Thr12 is an active-site residue. Residues Ser168, Cys171, and Thr174 each coordinate Na(+).

It belongs to the peptidase T1B family. HslV subfamily. In terms of assembly, a double ring-shaped homohexamer of HslV is capped on each side by a ring-shaped HslU homohexamer. The assembly of the HslU/HslV complex is dependent on binding of ATP.

It localises to the cytoplasm. It catalyses the reaction ATP-dependent cleavage of peptide bonds with broad specificity.. Its activity is regulated as follows. Allosterically activated by HslU binding. Protease subunit of a proteasome-like degradation complex believed to be a general protein degrading machinery. The sequence is that of ATP-dependent protease subunit HslV from Jannaschia sp. (strain CCS1).